The sequence spans 75 residues: Exodeoxyribonuclease 7 small subunit (75 aa).

The protein belongs to the XseB family. As to quaternary structure, heterooligomer composed of large and small subunits.

The protein resides in the cytoplasm. The catalysed reaction is Exonucleolytic cleavage in either 5'- to 3'- or 3'- to 5'-direction to yield nucleoside 5'-phosphates.. Its function is as follows. Bidirectionally degrades single-stranded DNA into large acid-insoluble oligonucleotides, which are then degraded further into small acid-soluble oligonucleotides. This Thermotoga maritima (strain ATCC 43589 / DSM 3109 / JCM 10099 / NBRC 100826 / MSB8) protein is Exodeoxyribonuclease 7 small subunit.